The sequence spans 319 residues: 4-diphosphocytidyl-2-C-methyl-D-erythritol kinase (319 aa).

The active site involves K18. An ATP-binding site is contributed by P103–T113. D145 is an active-site residue.

It belongs to the GHMP kinase family. IspE subfamily.

The catalysed reaction is 4-CDP-2-C-methyl-D-erythritol + ATP = 4-CDP-2-C-methyl-D-erythritol 2-phosphate + ADP + H(+). It participates in isoprenoid biosynthesis; isopentenyl diphosphate biosynthesis via DXP pathway; isopentenyl diphosphate from 1-deoxy-D-xylulose 5-phosphate: step 3/6. Its function is as follows. Catalyzes the phosphorylation of the position 2 hydroxy group of 4-diphosphocytidyl-2C-methyl-D-erythritol. In Prochlorococcus marinus (strain NATL1A), this protein is 4-diphosphocytidyl-2-C-methyl-D-erythritol kinase.